We begin with the raw amino-acid sequence, 1277 residues long: MTLGNSYDAFNHDPWMDVVGFEDPNQVTNRDISRIVLYSYMFLNTAKGCLVEYATFRQYMRELPKNAPQKLNFREMRQGLIALGRHCVGSRFETDLYESATSELMANHSVQTGRNIYGVDSFSLTSVSGTTATLLQERASERWIQWLGLESDYHCSFSSTRNAEDVVAGEAASSDHHQKISRVTRKRPREPKSTNDILVAGQKLFGSSFEFRDLHQLRLCYEIYMADTPSVAVQAPPGYGKTELFHLPLIALASKGDVKYVSFLFVPYTVLLANCMIRLGRCGCLNVAPVRNFIEEGYDGVTDLYVGIYDDLASTNFTDRIAAWENIVECTFRTNNVKLGYLIVDEFHNFETEVYRQSQFGGITNLDFDAFEKAIFLSGTAPEAVADAALQRIGLTGLAKKSMDINELKRSEDLSRGLSSYPTRMFNLIKEKSEVPLGHVHKIRKKVESQPEEALKLLLALFESEPESKAIVVASTTNEVEELACSWRKYFRVVWIHGKLDAAEKVSRTKEFVTDGNMRVLIGTKLVTEGIDIKQLMMVIMLDNRLNIIELIQGVGRLRDGGLCYLLSRKNSWAARNRKGELPPIKEGCITEQVREFYGLESKKGKKGQHVGCCGSRTDLSADTVELIERMDRLAEKQATASMSIVALPSNFQESNSSDRYRKYCSSDEDSNTCIHGSANASTNASTNAITTASTNVRTNATTNASTNATTNASTNATTNSSTNATTTASTNVRTSATTTASINVRTSATTTESTNSSTNATTTASINVRTSATTTKSINSSTNATITESTNSNTNATTTESTNSKTSATTTASTNSNTSATTTESTNSKTSATTTASTNSNTSATTTESTNSNTSATTTASTNSSTNATTTESTNASAKEDANKDGNAEDNRFHPVTDINKESYKRKGSQMVLLERKKLKAQFPNTSENMNVLQFLGFRSDEIKHLFLYGIDIYFCPEGVFTQYGLCKGCQKMFELCVCWAGQKVSYRRMAWEALAVERMLRNDEEYKEYLEDIEPYHGDPVGYLKYFSVKRREIYSQIQRNYAWYLAITRRRETISVLDSTRGKQGSQVFRMSGRQIKELYYKVWSNLRESKTEVLQYFLNWDEKKCQEEWEAKDDTVFVEALEKVGVFQRLRSMTSAGLQGPQYVKLQFSRHHRQLRSRYELSLGMHLRDQIALGVTPSKVPHWTAFLSMLIGLFYNKTFRQKLEYLLEQISEVWLLPHWLDLANVEVLAADNTKVPLYMLMVAVHKELDSDDVPDGRFDIILLCRDSSREVGE.

The Helicase ATP-binding domain maps to 222–399; the sequence is EIYMADTPSV…LQRIGLTGLA (178 aa). 235–242 is a binding site for ATP; it reads APPGYGKT. The short motif at 345–348 is the DEAH box element; that stretch reads DEFH. The region spanning 454-605 is the Helicase C-terminal domain; the sequence is ALKLLLALFE…EFYGLESKKG (152 aa). Disordered regions lie at residues 696 to 763 and 775 to 895; these read NVRT…NATT and TTKS…NRFH. Over residues 775–878 the composition is skewed to low complexity; it reads TTKSINSSTN…ATTTESTNAS (104 aa). Over residues 879–895 the composition is skewed to basic and acidic residues; that stretch reads AKEDANKDGNAEDNRFH.

Belongs to the helicase family. Yeast subtelomeric Y' repeat subfamily.

Functionally, catalyzes DNA unwinding and is involved in telomerase-independent telomere maintenance. The polypeptide is Y' element ATP-dependent helicase YEL077C (Saccharomyces cerevisiae (strain ATCC 204508 / S288c) (Baker's yeast)).